The chain runs to 655 residues: Epithelial sodium channel subunit gamma (655 aa).

Topologically, residues 1 to 55 (MAPGEKIKAKIKKNLPVRGPQAPTIKDLMHWYCLNTNTHGCRRIVVSRGRLRRLL) are cytoplasmic. A helical membrane pass occupies residues 56–76 (WIAFTLTAVALIIWQCALLVF). Residues 77–547 (SFYTVSVSIK…GGQLGLWMSC (471 aa)) are Extracellular-facing. 8 disulfides stabilise this stretch: cysteine 100/cysteine 289, cysteine 213/cysteine 220, cysteine 266/cysteine 273, cysteine 378/cysteine 463, cysteine 400/cysteine 459, cysteine 404/cysteine 455, cysteine 413/cysteine 440, and cysteine 415/cysteine 429. Positions 140–227 (RKRREAGSMR…SDCATYTFSS (88 aa)) are gating release of inhibition by proteolysis (GRIP); protease-sensitive region that is responsible for the proteolytic activation of the channel. Asparagine 215 is a glycosylation site (N-linked (GlcNAc...) asparagine). The N-linked (GlcNAc...) asparagine glycan is linked to asparagine 277. Residue asparagine 503 is glycosylated (N-linked (GlcNAc...) asparagine). The helical transmembrane segment at 548-568 (SVVCVIEIIEVFFIDFFSIIA) threads the bilayer. The Cytoplasmic portion of the chain corresponds to 569–655 (RRQWQKAKDW…LTDTQLTNEF (87 aa)). Residues 582-636 (RRTPPSTETPSSQQGQDNPALDTDDDLPTFTSAMRLPPAPEAPVPGTPPPRYNTL) are disordered. A compositionally biased stretch (polar residues) spans 585-598 (PPSTETPSSQQGQD). The segment covering 618 to 632 (PPAPEAPVPGTPPPR) has biased composition (pro residues). Positions 629–633 (PPPRY) match the PY motif; recruits WW domain-containing proteins and is thereby required for ubiquitination and inhibition of the channel by NEDD4 and NEDD4L motif.

This sequence belongs to the amiloride-sensitive sodium channel (TC 1.A.6) family. SCNN1G subfamily. As to quaternary structure, component of the heterotrimeric epithelial sodium channel (ENaC) composed of an alpha/SCNN1A, a beta/SCNN1B and a gamma/SCNN1G subunit. Interacts with WWP1 (via WW domains). Interacts with WWP2 (via WW domains); inhibits the channel. Interacts with the full-length immature form of PCSK9 (pro-PCSK9); inhibits ENaC by promoting its proteasomal degradation. Interacts with BPIFA1; the interaction is indirect via SCNN1B and inhibits the proteolytic maturation of SCNN1A and SCNN1G and the activation of ENaC. In terms of processing, phosphorylated on serine and threonine residues. Aldosterone and insulin increase the basal level of phosphorylation. Post-translationally, ubiquitinated. Can be ubiquitinated at multiple sites and undergo monoubiquitination and polyubiquitination. Ubiquitination by NEDD4 or NEDD4L inhibits the ENaC channel through endocytosis, intracellular retention and degradation of its individual subunits. ENaC is activated through the proteolytic maturation of its subunits. Furin cleaves the SCNN1G subunit first, followed by cleavage by prostasin (PRSS8), which results in a stepwise increase in the open probability of the channel due to the release of an inhibitory tract. BPIFA1, which is recruited by the SCNN1B subunit, prevents the proteolytic activation of ENaC. In terms of processing, N-glycosylated. N-linked glycans are processed to complex type during ENaC complex assembly and transport to the plasma membrane. As to expression, lung and kidney.

The protein resides in the apical cell membrane. The enzyme catalyses Na(+)(in) = Na(+)(out). Its activity is regulated as follows. Originally identified and characterized by its inhibition by the diuretic drug amiloride. Its function is as follows. This is one of the three pore-forming subunits of the heterotrimeric epithelial sodium channel (ENaC), a critical regulator of sodium balance and fluid homeostasis. ENaC operates in epithelial tissues, where it mediates the electrodiffusion of sodium ions from extracellular fluid through the apical membrane of cells, with water following osmotically. It plays a key role in maintaining sodium homeostasis through electrogenic sodium reabsorption in the kidneys. Additionally, ENaC is essential for airway surface liquid homeostasis, which is crucial for proper mucus clearance. The polypeptide is Epithelial sodium channel subunit gamma (Mus musculus (Mouse)).